A 411-amino-acid polypeptide reads, in one-letter code: MSPARLRPRLHFCLVLLLLLVVPAAWGCGPGRVVGSRRRPPRKLVPLAYKQFSPNVPEKTLGASGRYEGKIARSSERFKELTPNYNPDIIFKDEENTGADRLMTQRCKDRLNSLAISVMNQWPGVKLRVTEGWDEDGHHSEESLHYEGRAVDITTSDRDRNKYGLLARLAVEAGFDWVYYESKAHVHCSVKSEHSAAAKTGGCFPAGAQVRLESGARVALSAVRPGDRVLAMGEDGSPTFSDVLIFLDREPHRLRAFQVIETQDPPRRLALTPAHLLFTADNHTEPAARFRATFASHVQPGQYVLVAGVPGLQPARVAAVSTHVALGAYAPLTKHGTLVVEDVVASCFAAVADHHLAQLAFWPLRLFHSLAWGSWTPGEGVHWYPQLLYRLGRLLLEEGSFHPLGMSGAGS.

The first 27 residues, 1–27, serve as a signal peptide directing secretion; the sequence is MSPARLRPRLHFCLVLLLLLVVPAAWG. Cys-28 is lipidated: N-palmitoyl cysteine. The Ca(2+) site is built by Glu-94, Glu-95, Asp-100, Thr-130, Glu-131, Asp-134, and Asp-136. Residues His-145, Asp-152, and His-187 each contribute to the Zn(2+) site. The Cholesterol glycine ester moiety is linked to residue Gly-202. Asn-282 is a glycosylation site (N-linked (GlcNAc...) asparagine).

The protein belongs to the hedgehog family. As to quaternary structure, multimer. In terms of assembly, interacts with BOC and CDON. Interacts with PTCH1. Interacts with glypican GPC3. In terms of processing, cholesterylation is required for N-product targeting to lipid rafts and multimerization. The C-terminal domain displays an autoproteolysis activity and a cholesterol transferase activity. Both activities result in the cleavage of the full-length protein and covalent attachment of a cholesterol moiety to the C-terminal of the newly generated N-product. The N-product is the active species in both local and long-range signaling, whereas the C-product is degraded in the endoplasmic reticulum. Post-translationally, N-palmitoylation by HHAT of N-product is required for indian hedgehog protein N-product multimerization and full activity. In terms of tissue distribution, expressed in embryonic lung, and in adult kidney and liver.

It is found in the cell membrane. The protein localises to the endoplasmic reticulum membrane. Its subcellular location is the golgi apparatus membrane. It localises to the secreted. It carries out the reaction glycyl-L-cysteinyl-[protein] + cholesterol + H(+) = [protein]-C-terminal glycyl cholesterol ester + N-terminal L-cysteinyl-[protein]. Its function is as follows. Plays a role in embryonic morphogenesis; it is involved in the regulation of endochondral skeleton formation, and the development of retinal pigment epithelium (RPE), photoreceptors and periocular tissues. Functionally, the C-terminal part of the indian hedgehog protein precursor displays an autoproteolysis and a cholesterol transferase activity. Both activities result in the cleavage of the full-length protein into two parts followed by the covalent attachment of a cholesterol moiety to the C-terminal of the newly generated N-product. Both activities occur in the endoplasmic reticulum. Plays a role in hedgehog paracrine signaling. Associated with the very-low-density lipoprotein (VLDL) particles to function as a circulating morphogen for endothelial cell integrity maintenance. In terms of biological role, the dually lipidated indian hedgehog protein N-product is a morphogen which is essential for a variety of patterning events during development. Binds to the patched (PTCH1) receptor, which functions in association with smoothened (SMO), to activate the transcription of target genes. Plays a role in morphogenesis of the skeleton by coordinating growth and differentiation of the endochondral skeleton. Positively regulates PTHLH expression during endochondral bone formation preventing chondrocyte hypertrophy. In contrast, participates in normal chondrocyte proliferation in a PTHLH-independent pathway. This Homo sapiens (Human) protein is Indian hedgehog protein.